The primary structure comprises 413 residues: 1-deoxy-D-xylulose 5-phosphate reductoisomerase (413 aa).

Residues Thr13, Gly14, Ser15, Ile16, Arg40, Asn41, and Asn127 each coordinate NADPH. Lys128 lines the 1-deoxy-D-xylulose 5-phosphate pocket. Glu129 contributes to the NADPH binding site. A Mn(2+)-binding site is contributed by Asp153. Positions 154, 155, 184, and 207 each coordinate 1-deoxy-D-xylulose 5-phosphate. Glu155 contacts Mn(2+). Residue Gly213 participates in NADPH binding. Residues Ser220, Asn225, Lys226, and Glu229 each coordinate 1-deoxy-D-xylulose 5-phosphate. Residue Glu229 participates in Mn(2+) binding.

The protein belongs to the DXR family. Mg(2+) serves as cofactor. The cofactor is Mn(2+).

The enzyme catalyses 2-C-methyl-D-erythritol 4-phosphate + NADP(+) = 1-deoxy-D-xylulose 5-phosphate + NADPH + H(+). It functions in the pathway isoprenoid biosynthesis; isopentenyl diphosphate biosynthesis via DXP pathway; isopentenyl diphosphate from 1-deoxy-D-xylulose 5-phosphate: step 1/6. Catalyzes the NADPH-dependent rearrangement and reduction of 1-deoxy-D-xylulose-5-phosphate (DXP) to 2-C-methyl-D-erythritol 4-phosphate (MEP). The protein is 1-deoxy-D-xylulose 5-phosphate reductoisomerase of Nitrosomonas europaea (strain ATCC 19718 / CIP 103999 / KCTC 2705 / NBRC 14298).